Consider the following 312-residue polypeptide: Pantothenate kinase (312 aa).

97 to 104 is an ATP binding site; that stretch reads GSVAVGKS.

Belongs to the prokaryotic pantothenate kinase family.

Its subcellular location is the cytoplasm. It carries out the reaction (R)-pantothenate + ATP = (R)-4'-phosphopantothenate + ADP + H(+). The protein operates within cofactor biosynthesis; coenzyme A biosynthesis; CoA from (R)-pantothenate: step 1/5. The protein is Pantothenate kinase of Corynebacterium glutamicum (strain ATCC 13032 / DSM 20300 / JCM 1318 / BCRC 11384 / CCUG 27702 / LMG 3730 / NBRC 12168 / NCIMB 10025 / NRRL B-2784 / 534).